We begin with the raw amino-acid sequence, 342 residues long: S-adenosylmethionine:tRNA ribosyltransferase-isomerase (342 aa).

Belongs to the QueA family. In terms of assembly, monomer.

It localises to the cytoplasm. The enzyme catalyses 7-aminomethyl-7-carbaguanosine(34) in tRNA + S-adenosyl-L-methionine = epoxyqueuosine(34) in tRNA + adenine + L-methionine + 2 H(+). The protein operates within tRNA modification; tRNA-queuosine biosynthesis. Transfers and isomerizes the ribose moiety from AdoMet to the 7-aminomethyl group of 7-deazaguanine (preQ1-tRNA) to give epoxyqueuosine (oQ-tRNA). The protein is S-adenosylmethionine:tRNA ribosyltransferase-isomerase of Campylobacter jejuni (strain RM1221).